The primary structure comprises 163 residues: Crossover junction endodeoxyribonuclease RuvC (163 aa).

Residues Asp8, Glu68, and Asp140 contribute to the active site. The Mg(2+) site is built by Asp8, Glu68, and Asp140.

The protein belongs to the RuvC family. In terms of assembly, homodimer which binds Holliday junction (HJ) DNA. The HJ becomes 2-fold symmetrical on binding to RuvC with unstacked arms; it has a different conformation from HJ DNA in complex with RuvA. In the full resolvosome a probable DNA-RuvA(4)-RuvB(12)-RuvC(2) complex forms which resolves the HJ. Mg(2+) serves as cofactor.

Its subcellular location is the cytoplasm. The catalysed reaction is Endonucleolytic cleavage at a junction such as a reciprocal single-stranded crossover between two homologous DNA duplexes (Holliday junction).. The RuvA-RuvB-RuvC complex processes Holliday junction (HJ) DNA during genetic recombination and DNA repair. Endonuclease that resolves HJ intermediates. Cleaves cruciform DNA by making single-stranded nicks across the HJ at symmetrical positions within the homologous arms, yielding a 5'-phosphate and a 3'-hydroxyl group; requires a central core of homology in the junction. The consensus cleavage sequence is 5'-(A/T)TT(C/G)-3'. Cleavage occurs on the 3'-side of the TT dinucleotide at the point of strand exchange. HJ branch migration catalyzed by RuvA-RuvB allows RuvC to scan DNA until it finds its consensus sequence, where it cleaves and resolves the cruciform DNA. The sequence is that of Crossover junction endodeoxyribonuclease RuvC from Erythrobacter litoralis (strain HTCC2594).